Reading from the N-terminus, the 56-residue chain is Botcinic acid biosynthesis cluster B protein 14 (56 aa).

It functions in the pathway polyketide biosynthesis. Functionally, part of the gene cluster B that mediates the biosynthesis of botcinic acid and its botcinin derivatives, acetate-derived polyketides that contribute to virulence when combined with the sesquiterpene botrydial. Botcinic acid and its derivatives have been shown to induce chlorosis and necrosis during host plant infection, but also have antifungal activities. Two polyketide synthases, BOA6 and BOA9, are involved in the biosynthesis of botcinins. BOA6 mediates the formation of the per-methylated tetraketide core by condensation of four units of malonyl-CoA with one unit of acetyl-CoA, which would be methylated in activated methylene groups to yield a bicyclic acid intermediate that could then either be converted to botrylactone derivatives or lose the starter acetate unit through a retro-Claisen type C-C bond cleavage to yield botcinin derivatives. The second polyketide synthase, BOA9, is probably required for the biosynthesis of the tetraketide side chain of botcinins. The methyltransferase (MT) domain within BOA6 is probably responsible for the incorporation of four methyl groups. The trans-enoyl reductase BOA5 might take over the enoyl reductase function of BOA6 that misses an ER domain. The monooxygenases BOA2, BOA3 and BOA4 might be involved in further hydroxylations at C4, C5 and C8, whereas BOA7, close to BOA9, could potentially be involved in the hydroxylation at C4 in the side chain of botcinins. This Botryotinia fuckeliana (strain B05.10) (Noble rot fungus) protein is Botcinic acid biosynthesis cluster B protein 14.